The primary structure comprises 445 residues: Phosphoglucosamine mutase (445 aa).

The active-site Phosphoserine intermediate is serine 101. Residues serine 101, aspartate 240, aspartate 242, and aspartate 244 each contribute to the Mg(2+) site. Position 101 is a phosphoserine (serine 101).

The protein belongs to the phosphohexose mutase family. The cofactor is Mg(2+). Post-translationally, activated by phosphorylation.

The catalysed reaction is alpha-D-glucosamine 1-phosphate = D-glucosamine 6-phosphate. In terms of biological role, catalyzes the conversion of glucosamine-6-phosphate to glucosamine-1-phosphate. This is Phosphoglucosamine mutase from Pseudomonas fluorescens (strain SBW25).